The following is a 227-amino-acid chain: Ribosomal RNA large subunit methyltransferase E (227 aa).

Glycine 78, tryptophan 80, aspartate 103, aspartate 119, and aspartate 143 together coordinate S-adenosyl-L-methionine. Residue lysine 183 is the Proton acceptor of the active site.

It belongs to the class I-like SAM-binding methyltransferase superfamily. RNA methyltransferase RlmE family.

The protein resides in the cytoplasm. The catalysed reaction is uridine(2552) in 23S rRNA + S-adenosyl-L-methionine = 2'-O-methyluridine(2552) in 23S rRNA + S-adenosyl-L-homocysteine + H(+). Specifically methylates the uridine in position 2552 of 23S rRNA at the 2'-O position of the ribose in the fully assembled 50S ribosomal subunit. The polypeptide is Ribosomal RNA large subunit methyltransferase E (Rickettsia typhi (strain ATCC VR-144 / Wilmington)).